Consider the following 425-residue polypeptide: Serine--tRNA ligase (425 aa).

Position 230–232 (230–232 (TSE)) interacts with L-serine. Residues 261–263 (RRE) and Val-277 each bind ATP. L-serine is bound at residue Glu-284. Position 348 to 351 (348 to 351 (ELTS)) interacts with ATP. An L-serine-binding site is contributed by Thr-382.

The protein belongs to the class-II aminoacyl-tRNA synthetase family. Type-1 seryl-tRNA synthetase subfamily. In terms of assembly, homodimer. The tRNA molecule binds across the dimer.

It localises to the cytoplasm. It carries out the reaction tRNA(Ser) + L-serine + ATP = L-seryl-tRNA(Ser) + AMP + diphosphate + H(+). The enzyme catalyses tRNA(Sec) + L-serine + ATP = L-seryl-tRNA(Sec) + AMP + diphosphate + H(+). It participates in aminoacyl-tRNA biosynthesis; selenocysteinyl-tRNA(Sec) biosynthesis; L-seryl-tRNA(Sec) from L-serine and tRNA(Sec): step 1/1. Functionally, catalyzes the attachment of serine to tRNA(Ser). Is also able to aminoacylate tRNA(Sec) with serine, to form the misacylated tRNA L-seryl-tRNA(Sec), which will be further converted into selenocysteinyl-tRNA(Sec). The polypeptide is Serine--tRNA ligase (Streptomyces coelicolor (strain ATCC BAA-471 / A3(2) / M145)).